We begin with the raw amino-acid sequence, 271 residues long: DNA repair protein RecO (271 aa).

Belongs to the RecO family.

Involved in DNA repair and RecF pathway recombination. The chain is DNA repair protein RecO from Rhodococcus erythropolis (strain PR4 / NBRC 100887).